Reading from the N-terminus, the 495-residue chain is Histidine--tRNA ligase (495 aa).

The protein belongs to the class-II aminoacyl-tRNA synthetase family. In terms of assembly, homodimer.

It localises to the cytoplasm. The catalysed reaction is tRNA(His) + L-histidine + ATP = L-histidyl-tRNA(His) + AMP + diphosphate + H(+). The polypeptide is Histidine--tRNA ligase (Ruegeria pomeroyi (strain ATCC 700808 / DSM 15171 / DSS-3) (Silicibacter pomeroyi)).